The chain runs to 224 residues: Response regulator protein GraR (224 aa).

The 114-residue stretch at 2 to 115 folds into the Response regulatory domain; that stretch reads QILLVEDDNT…VLIAKLQAIY (114 aa). Asp-51 carries the post-translational modification 4-aspartylphosphate. Residues 126–224 constitute a DNA-binding region (ompR/PhoB-type); that stretch reads KRTLSWQDAT…KVGKGYLAHE (99 aa).

Post-translationally, phosphorylated by GraS.

It is found in the cytoplasm. Functionally, member of the two-component regulatory system GraR/GraS involved in resistance against cationic antimicrobial peptides (CAMPs). The polypeptide is Response regulator protein GraR (graR) (Staphylococcus epidermidis (strain ATCC 35984 / DSM 28319 / BCRC 17069 / CCUG 31568 / BM 3577 / RP62A)).